The following is a 620-amino-acid chain: Chaperone protein DnaK (620 aa).

At Thr-197 the chain carries Phosphothreonine; by autocatalysis. The disordered stretch occupies residues 591 to 620 (AQKLGEAMANKNNAEQPKKKDDDVIDAEVE).

Belongs to the heat shock protein 70 family.

Its function is as follows. Acts as a chaperone. The chain is Chaperone protein DnaK from Helicobacter pylori (strain HPAG1).